The following is a 72-amino-acid chain: ATP synthase subunit c (72 aa).

2 consecutive transmembrane segments (helical) span residues 1–21 and 49–69; these read MSLG…GAGI and FIGV…AFIV.

It belongs to the ATPase C chain family. F-type ATPases have 2 components, F(1) - the catalytic core - and F(0) - the membrane proton channel. F(1) has five subunits: alpha(3), beta(3), gamma(1), delta(1), epsilon(1). F(0) has three main subunits: a(1), b(2) and c(10-14). The alpha and beta chains form an alternating ring which encloses part of the gamma chain. F(1) is attached to F(0) by a central stalk formed by the gamma and epsilon chains, while a peripheral stalk is formed by the delta and b chains.

The protein localises to the cell membrane. Functionally, f(1)F(0) ATP synthase produces ATP from ADP in the presence of a proton or sodium gradient. F-type ATPases consist of two structural domains, F(1) containing the extramembraneous catalytic core and F(0) containing the membrane proton channel, linked together by a central stalk and a peripheral stalk. During catalysis, ATP synthesis in the catalytic domain of F(1) is coupled via a rotary mechanism of the central stalk subunits to proton translocation. In terms of biological role, key component of the F(0) channel; it plays a direct role in translocation across the membrane. A homomeric c-ring of between 10-14 subunits forms the central stalk rotor element with the F(1) delta and epsilon subunits. In Bacillus cytotoxicus (strain DSM 22905 / CIP 110041 / 391-98 / NVH 391-98), this protein is ATP synthase subunit c.